A 447-amino-acid chain; its full sequence is Protein CLT1, chloroplastic (447 aa).

A chloroplast-targeting transit peptide spans 1–48 (MATTSSDRLIAGLTASIGSIESRYANPAQSVSLICRNQINGAPPIVLR). The next 10 membrane-spanning stretches (helical) occupy residues 103–123 (MEIVIAAATTAALGVGNRVLY), 135–155 (FFLAQLSTFGYVAVYFSILYF), 172–192 (LPFLIVGVLESLALAAGMAAA), 200–220 (TTVLSQTFLVWQILFSIIFLG), 228–248 (ILGCTLVAFGVIVSVASGSGA), 256–276 (GILWSLLMVFSFLLQGADTVM), 304–324 (IFQVICIALLLPFLSKLWGIP), 351–371 (GAPLLPVMFVMMNMAYNISLL), 387–407 (TVSVPIAVYCFTLPLPYLGVA), and 413–433 (GFVAGTIILVVGMLLYAWTPS).

The protein belongs to the CRT-like transporter family.

It is found in the plastid. Its subcellular location is the chloroplast membrane. Involved in thiol transport from the plastid to the cytosol. Transports probably both glutathione (GSH) and its precursor, gamma-glutamylcysteine (gamma-EC). Exhibits some functional redundancy with CLT3 in maintaining the root GSH pool. The polypeptide is Protein CLT1, chloroplastic (Arabidopsis thaliana (Mouse-ear cress)).